We begin with the raw amino-acid sequence, 218 residues long: Histidine biosynthesis bifunctional protein HisIE (218 aa).

The interval 1 to 131 is phosphoribosyl-AMP cyclohydrolase; the sequence is MAPHQFKSKG…GDYDLPPADT (131 aa). Residues 132–218 form a phosphoribosyl-ATP pyrophosphohydrolase region; sequence LSQVFRVVEE…VYRALQQRRR (87 aa).

It in the N-terminal section; belongs to the PRA-CH family. The protein in the C-terminal section; belongs to the PRA-PH family.

The protein resides in the cytoplasm. It catalyses the reaction 1-(5-phospho-beta-D-ribosyl)-ATP + H2O = 1-(5-phospho-beta-D-ribosyl)-5'-AMP + diphosphate + H(+). The catalysed reaction is 1-(5-phospho-beta-D-ribosyl)-5'-AMP + H2O = 1-(5-phospho-beta-D-ribosyl)-5-[(5-phospho-beta-D-ribosylamino)methylideneamino]imidazole-4-carboxamide. It participates in amino-acid biosynthesis; L-histidine biosynthesis; L-histidine from 5-phospho-alpha-D-ribose 1-diphosphate: step 2/9. The protein operates within amino-acid biosynthesis; L-histidine biosynthesis; L-histidine from 5-phospho-alpha-D-ribose 1-diphosphate: step 3/9. The polypeptide is Histidine biosynthesis bifunctional protein HisIE (Gloeobacter violaceus (strain ATCC 29082 / PCC 7421)).